The sequence spans 379 residues: Bifunctional enzyme IspD/IspF (379 aa).

A 2-C-methyl-D-erythritol 4-phosphate cytidylyltransferase region spans residues Met-1 to Cys-213. The 2-C-methyl-D-erythritol 2,4-cyclodiphosphate synthase stretch occupies residues Tyr-214–Arg-379. A divalent metal cation-binding residues include Asp-220 and His-222. 4-CDP-2-C-methyl-D-erythritol 2-phosphate is bound by residues Asp-220–His-222 and His-246–Ser-247. An a divalent metal cation-binding site is contributed by His-254. 4-CDP-2-C-methyl-D-erythritol 2-phosphate is bound by residues Asp-268–Gly-270, Phe-273–Asp-277, Thr-344–Glu-347, Phe-351, and Arg-354.

It in the N-terminal section; belongs to the IspD/TarI cytidylyltransferase family. IspD subfamily. The protein in the C-terminal section; belongs to the IspF family. A divalent metal cation is required as a cofactor.

The enzyme catalyses 2-C-methyl-D-erythritol 4-phosphate + CTP + H(+) = 4-CDP-2-C-methyl-D-erythritol + diphosphate. It catalyses the reaction 4-CDP-2-C-methyl-D-erythritol 2-phosphate = 2-C-methyl-D-erythritol 2,4-cyclic diphosphate + CMP. It participates in isoprenoid biosynthesis; isopentenyl diphosphate biosynthesis via DXP pathway; isopentenyl diphosphate from 1-deoxy-D-xylulose 5-phosphate: step 2/6. It functions in the pathway isoprenoid biosynthesis; isopentenyl diphosphate biosynthesis via DXP pathway; isopentenyl diphosphate from 1-deoxy-D-xylulose 5-phosphate: step 4/6. Functionally, bifunctional enzyme that catalyzes the formation of 4-diphosphocytidyl-2-C-methyl-D-erythritol from CTP and 2-C-methyl-D-erythritol 4-phosphate (MEP) (IspD), and catalyzes the conversion of 4-diphosphocytidyl-2-C-methyl-D-erythritol 2-phosphate (CDP-ME2P) to 2-C-methyl-D-erythritol 2,4-cyclodiphosphate (ME-CPP) with a corresponding release of cytidine 5-monophosphate (CMP) (IspF). The sequence is that of Bifunctional enzyme IspD/IspF from Wolinella succinogenes (strain ATCC 29543 / DSM 1740 / CCUG 13145 / JCM 31913 / LMG 7466 / NCTC 11488 / FDC 602W) (Vibrio succinogenes).